Here is a 166-residue protein sequence, read N- to C-terminus: Lipoprotein signal peptidase (166 aa).

4 helical membrane passes run 9-29 (ASGALAPWLGISLIVILFDQL), 45-65 (ALTSFFNLVLVYNRGAAFGFL), 71-91 (WQRWAFTALGVGATLVICFLL), and 100-120 (FSLSLALILGGALGNVIDRLV). Active-site residues include Asp126 and Asp144. A helical transmembrane segment spans residues 135 to 155 (WHFPAFNLADSAITIGAVLLI).

It belongs to the peptidase A8 family.

It is found in the cell inner membrane. The catalysed reaction is Release of signal peptides from bacterial membrane prolipoproteins. Hydrolyzes -Xaa-Yaa-Zaa-|-(S,diacylglyceryl)Cys-, in which Xaa is hydrophobic (preferably Leu), and Yaa (Ala or Ser) and Zaa (Gly or Ala) have small, neutral side chains.. The protein operates within protein modification; lipoprotein biosynthesis (signal peptide cleavage). Functionally, this protein specifically catalyzes the removal of signal peptides from prolipoproteins. The sequence is that of Lipoprotein signal peptidase from Burkholderia multivorans (strain ATCC 17616 / 249).